A 1378-amino-acid chain; its full sequence is S-cell enriched with leucine-rich repeat-containing protein slrA (1378 aa).

A helical membrane pass occupies residues 17-37 (IFKILYCYLFTSLLLILSTWV). Residues Asn59, Asn112, Asn143, Asn172, and Asn201 are each glycosylated (N-linked (GlcNAc...) asparagine). LRR repeat units lie at residues 143–165 (NLTGIDLSNNNLKGNITPYLPYL), 167–188 (HLRNLNLSNNHLSGCFPDGLLK), 191–212 (SLVALDLSYNNISCTLSLADSK), 213–235 (AISYIDISHNHLTGYFKNVWKTP), 236–257 (NLLFLDLSFNKLYGTILKEFFR), 260–281 (SLDYVNLSSNQLIGFLPILSKS), 282–304 (RISYLNISNNRLIGNITLLTCWK), 307–329 (SLRIFDAENNMFEGALPESIFDH), and 331–353 (PLQYVNLKGNIVKDPLPSILDCA). Asn265, Asn287, and Asn296 each carry an N-linked (GlcNAc...) asparagine glycan. Residues Asn416, Asn436, Asn451, Asn491, Asn513, Asn596, Asn605, Asn634, Asn704, Asn710, Asn740, Asn741, Asn771, Asn788, Asn801, Asn826, Asn843, Asn861, Asn875, and Asn907 are each glycosylated (N-linked (GlcNAc...) asparagine). Residues 886–946 (SLNNNNNNNN…NNNENNNENK (61 aa)) adopt a coiled-coil conformation. The span at 891 to 909 (NNNNNNNNNKNNNNNNNDS) shows a compositional bias: low complexity. The segment at 891-945 (NNNNNNNNNKNNNNNNNDSNNEKEVVEDEEEDLDYSSQNDNNNINNNNNENNNEN) is disordered. Residues 915–924 (VVEDEEEDLD) are compositionally biased toward acidic residues. Residues 929 to 945 (NDNNNINNNNNENNNEN) show a composition bias toward low complexity. Residues Asn953, Asn970, Asn1090, and Asn1100 are each glycosylated (N-linked (GlcNAc...) asparagine). Residues 1160-1180 (YYIVFFGCASGLILVLVICIV) form a helical membrane-spanning segment. The segment covering 1227-1276 (DLNNNNNNNNNNNNNNNNNNNNNNNNNNNNNNNNNFNDGSDTFNNNNKKN) has biased composition (low complexity). A disordered region spans residues 1227–1378 (DLNNNNNNNN…KKHLTIINKK (152 aa)). Positions 1289-1304 (DGKENDIKNINNKKDE) are enriched in basic and acidic residues. The span at 1305-1324 (KEDDGDDDDDEDDDEYEDDT) shows a compositional bias: acidic residues. A compositionally biased stretch (low complexity) spans 1328–1353 (SSGNSSRSKGSDGGSSSNSLSSDKQS). Residues Asn1331 and Asn1360 are each glycosylated (N-linked (GlcNAc...) asparagine). Residues 1354 to 1364 (FNNGNENNSII) are compositionally biased toward polar residues. Positions 1368-1378 (KKKHLTIINKK) are enriched in basic residues.

It is found in the membrane. This is S-cell enriched with leucine-rich repeat-containing protein slrA (slrA) from Dictyostelium discoideum (Social amoeba).